Reading from the N-terminus, the 1019-residue chain is Photoactivated adenylate cyclase subunit alpha (1019 aa).

In terms of domain architecture, BLUF 1 spans 55 to 148 (LRRLMYLSAS…GRMYGEWHMK (94 aa)). A Guanylate cyclase 1 domain is found at 204–332 (VVTFIYLVEF…DCINTASRIT (129 aa)). The BLUF 2 domain maps to 467–559 (LITLTYISQA…RVYGSPLDMT (93 aa)). In terms of domain architecture, Guanylate cyclase 2 spans 615–744 (VMLATDICSF…EVSARVMEVE (130 aa)). The disordered stretch occupies residues 822–861 (GTNAPGRGAPAGGIPSSPKVRPPGRTNSVSSYTPDPNEAL). The segment covering 825 to 839 (APGRGAPAGGIPSSP) has biased composition (low complexity). The span at 846-855 (RTNSVSSYTP) shows a compositional bias: polar residues.

It belongs to the adenylyl cyclase class-4/guanylyl cyclase family. Heterotetramer of two alpha and two beta subunits. FAD serves as cofactor.

It localises to the cell projection. The protein localises to the cilium. It is found in the flagellum. It carries out the reaction ATP = 3',5'-cyclic AMP + diphosphate. Its activity is regulated as follows. Activity increased by up to 80-fold under blue light. Its function is as follows. Acts as a blue light photoreceptor for the step-up photophobic response. Mediates photoavoidance. The chain is Photoactivated adenylate cyclase subunit alpha from Euglena gracilis.